Here is a 102-residue protein sequence, read N- to C-terminus: FMRFamide-like neuropeptides 9 (102 aa).

An N-terminal signal peptide occupies residues 1-19 (MNQFYALFLVACIAAMANA). Positions 20 to 63 (YEEPDLDALAEFCGKESNRKYCDQIAQLATQHAIGINQEQVRME) are excised as a propeptide. Phe-72 bears the Phenylalanine amide mark. Residues 75–90 (RSGYPLVIDDEEMRMD) constitute a propeptide that is removed on maturation. Phenylalanine amide is present on Phe-99.

This sequence belongs to the FARP (FMRFamide related peptide) family. In terms of tissue distribution, each flp gene is expressed in a distinct set of neurons.

It localises to the secreted. Its function is as follows. FMRFamides and FMRFamide-like peptides are neuropeptides. Functionally, KPSFVRF-amide: Has no effect on somatic body wall muscle, inhibits contraction of vaginal vera muscle, and inhibits the activity of the dissected pharyngeal myogenic muscle system. Acts as a ligand for the npr-22 receptor in vitro. This chain is FMRFamide-like neuropeptides 9, found in Caenorhabditis elegans.